A 781-amino-acid polypeptide reads, in one-letter code: DEAD-box ATP-dependent RNA helicase 50 (781 aa).

Disordered stretches follow at residues 72-103 (EFAP…LTAS), 117-148 (GKVT…DEGF), 166-240 (IPRS…KGDR), 254-292 (GRAI…REDR), and 313-342 (YNPR…RGWG). Over residues 79 to 88 (SDLLSSIPSE) the composition is skewed to low complexity. A compositionally biased stretch (acidic residues) spans 130–143 (EEEDEDDASDENYS). The segment covering 171–197 (KSAERNEVKRASKVRESRESRRDLDRL) has biased composition (basic and acidic residues). The segment covering 198 to 208 (EGDDEDVDEVS) has biased composition (acidic residues). Residues 216-226 (NQRAGSRSSYS) are compositionally biased toward polar residues. The segment covering 254–274 (GRAIDEVSNPRKFNDNERAES) has biased composition (basic and acidic residues). Residues 275–286 (RSSYSRDSSANS) show a composition bias toward low complexity. Basic and acidic residues predominate over residues 313–325 (YNPRRFTDNERGL). The short motif at 374–402 (KTFAEIGCSEDMMKALKEQNFDRPAHIQA) is the Q motif element. Residues 405–586 (FSPVIDGKSC…VEVFPDCEVV (182 aa)) form the Helicase ATP-binding domain. Position 418–425 (418–425 (DQSGSGKT)) interacts with ATP. Residues 533–536 (DEVD) carry the DEAD box motif. Residues 621-781 (NKKTALLQIM…DVPNAYEFTT (161 aa)) form the Helicase C-terminal domain.

The protein belongs to the DEAD box helicase family.

It catalyses the reaction ATP + H2O = ADP + phosphate + H(+). Probably involved in resistance to biotic and abiotic stresses. In Arabidopsis thaliana (Mouse-ear cress), this protein is DEAD-box ATP-dependent RNA helicase 50 (RH50).